The chain runs to 145 residues: Ribosome-binding factor A (145 aa).

The tract at residues 126-145 (RDLDTETDAEAGSETTKEED) is disordered. Positions 130 to 145 (TETDAEAGSETTKEED) are enriched in acidic residues.

The protein belongs to the RbfA family. As to quaternary structure, monomer. Binds 30S ribosomal subunits, but not 50S ribosomal subunits or 70S ribosomes.

It localises to the cytoplasm. Functionally, one of several proteins that assist in the late maturation steps of the functional core of the 30S ribosomal subunit. Associates with free 30S ribosomal subunits (but not with 30S subunits that are part of 70S ribosomes or polysomes). Required for efficient processing of 16S rRNA. May interact with the 5'-terminal helix region of 16S rRNA. This Azorhizobium caulinodans (strain ATCC 43989 / DSM 5975 / JCM 20966 / LMG 6465 / NBRC 14845 / NCIMB 13405 / ORS 571) protein is Ribosome-binding factor A.